Consider the following 498-residue polypeptide: ATP synthase subunit beta, chloroplastic (498 aa).

172–179 (GGAGVGKT) contacts ATP.

It belongs to the ATPase alpha/beta chains family. F-type ATPases have 2 components, CF(1) - the catalytic core - and CF(0) - the membrane proton channel. CF(1) has five subunits: alpha(3), beta(3), gamma(1), delta(1), epsilon(1). CF(0) has four main subunits: a(1), b(1), b'(1) and c(9-12).

Its subcellular location is the plastid. The protein resides in the chloroplast thylakoid membrane. The enzyme catalyses ATP + H2O + 4 H(+)(in) = ADP + phosphate + 5 H(+)(out). Its function is as follows. Produces ATP from ADP in the presence of a proton gradient across the membrane. The catalytic sites are hosted primarily by the beta subunits. The chain is ATP synthase subunit beta, chloroplastic from Atropa belladonna (Belladonna).